Reading from the N-terminus, the 130-residue chain is 3-aminoacrylate deaminase RutC (130 aa).

It belongs to the RutC family.

It catalyses the reaction (Z)-3-aminoacrylate + H2O + H(+) = 3-oxopropanoate + NH4(+). Functionally, involved in pyrimidine catabolism. Catalyzes the deamination of 3-aminoacrylate to malonic semialdehyde, a reaction that can also occur spontaneously. RutC may facilitate the reaction and modulate the metabolic fitness, rather than catalyzing essential functions. The sequence is that of 3-aminoacrylate deaminase RutC from Variovorax paradoxus (strain S110).